The following is a 791-amino-acid chain: Nuclear cap-binding protein subunit 1-B (791 aa).

The interval 1–24 (MSRRRHSDENDGGQPHKRRRTSEP) is disordered. Residues 28-240 (EDRLESLICR…CLWAQVQKLK (213 aa)) form the MIF4G domain. The stretch at 641 to 714 (LHSTIRKMNK…SEQKNLFLVI (74 aa)) forms a coiled coil. Positions 664–687 (QRLAKQHKHRDSDDNDEDSGRKDG) are disordered.

This sequence belongs to the NCBP1 family. As to quaternary structure, component of the nuclear cap-binding complex (CBC), a heterodimer composed of ncbp1/cbp80 and ncbp2/cbp20 that interacts with m7GpppG-capped RNA. Component of an alternative nuclear cap-binding complex (CBC) composed of ncbp1/cbp80 and ncbp3.

The protein resides in the nucleus. It is found in the cytoplasm. In terms of biological role, component of the cap-binding complex (CBC), which binds cotranscriptionally to the 5'-cap of pre-mRNAs and is involved in various processes such as pre-mRNA splicing, translation regulation, nonsense-mediated mRNA decay, RNA-mediated gene silencing (RNAi) by microRNAs (miRNAs) and mRNA export. The CBC complex is involved in mRNA export from the nucleus, leading to the recruitment of the mRNA export machinery to the 5'-end of mRNA and to mRNA export in a 5' to 3' direction through the nuclear pore. The CBC complex is also involved in mediating U snRNA and intronless mRNAs export from the nucleus. The CBC complex is essential for a pioneer round of mRNA translation, before steady state translation when the CBC complex is replaced by cytoplasmic cap-binding protein eIF4E. The pioneer round of mRNA translation mediated by the CBC complex plays a central role in nonsense-mediated mRNA decay (NMD), NMD only taking place in mRNAs bound to the CBC complex, but not on eIF4E-bound mRNAs. The CBC complex enhances NMD in mRNAs containing at least one exon-junction complex (EJC), promoting the interaction between UPF1 and UPF2. The CBC complex is also involved in 'failsafe' NMD, which is independent of the EJC complex, while it does not participate in Staufen-mediated mRNA decay (SMD). During cell proliferation, the CBC complex is also involved in microRNAs (miRNAs) biogenesis via its interaction with SRRT/ARS2 and is required for miRNA-mediated RNA interference. The CBC complex also acts as a negative regulator of parn, thereby acting as an inhibitor of mRNA deadenylation. In the CBC complex, NCBP1/CBP80 does not bind directly capped RNAs (m7GpppG-capped RNA) but is required to stabilize the movement of the N-terminal loop of NCBP2/CBP20 and lock the CBC into a high affinity cap-binding state with the cap structure. Associates with NCBP3 to form an alternative cap-binding complex (CBC) which plays a key role in mRNA export. The conventional CBC with NCBP2 binds both small nuclear RNA (snRNA) and messenger (mRNA) and is involved in their export from the nucleus whereas the alternative CBC with NCBP3 does not bind snRNA and associates only with mRNA thereby playing a role only in mRNA export. This Xenopus laevis (African clawed frog) protein is Nuclear cap-binding protein subunit 1-B (ncbp1-b).